The following is an 854-amino-acid chain: Aryl hydrocarbon receptor (854 aa).

Positions 1–9 (MSSGANITY) are excised as a propeptide. The disordered stretch occupies residues 1–38 (MSSGANITYASRKRRKPVQKTVKPIPAEGIKSNPSKRH). 2 short sequence motifs (nuclear localization signal) span residues 12-15 (RKRR) and 36-41 (KRHRDR). Residues 26 to 79 (PAEGIKSNPSKRHRDRLNTELDRLASLLPFPQDVINKLDKLSVLRLSVSYLRAK) form the bHLH domain. The DNA-binding stretch occupies residues 37 to 65 (RHRDRLNTELDRLASLLPFPQDVINKLDK). Required for maintaining the overall integrity of the AHR:ARNT heterodimer and its transcriptional activity stretches follow at residues 49–81 (LASL…AKSF), 116–124 (LLQALNGFV), and 264–266 (FAI). A Nuclear export signal motif is present at residues 63–71 (LDKLSVLRL). The PAS 1 domain maps to 111–175 (QEGEFLLQAL…AEFQRQLHWA (65 aa)). The PAS 2 domain maps to 270 to 340 (LQPPSILEIR…CAESHIRMIK (71 aa)). Positions 346-387 (MTVFRLLAKHSRWRWVQSNARLIYRNGRPDYIIATQRPLTDE) constitute a PAC domain. Positions 425–452 (LPIRTKSNTSRKDWAPQSTPSKDSFHPS) are disordered. A compositionally biased stretch (polar residues) spans 440-452 (PQSTPSKDSFHPS).

As to quaternary structure, homodimer. Heterodimer; efficient DNA binding requires dimerization with another bHLH protein. Interacts with ARNT; the heterodimer ARNT:AHR binds to core DNA sequence 5'-TGCGTG-3' within the dioxin response element (DRE) of target gene promoters and activates their transcription. Binds MYBBP1A. Interacts with coactivators including SRC-1, RIP140 and NOCA7, and with the corepressor SMRT. Interacts with NEDD8 and IVNS1ABP. Interacts with BMAL1. Interacts with HSP90AB1. Interacts with TIPARP; leading to mono-ADP-ribosylation of AHR and subsequent inhibition of AHR. In terms of processing, mono-ADP-ribosylated, leading to inhibit transcription activator activity of AHR.

The protein localises to the cytoplasm. The protein resides in the nucleus. In terms of biological role, ligand-activated transcription factor that enables cells to adapt to changing conditions by sensing compounds from the environment, diet, microbiome and cellular metabolism, and which plays important roles in development, immunity and cancer. Upon ligand binding, translocates into the nucleus, where it heterodimerizes with ARNT and induces transcription by binding to xenobiotic response elements (XRE). Regulates a variety of biological processes, including angiogenesis, hematopoiesis, drug and lipid metabolism, cell motility and immune modulation. Xenobiotics can act as ligands: upon xenobiotic-binding, activates the expression of multiple phase I and II xenobiotic chemical metabolizing enzyme genes (such as the CYP1A1 gene). Mediates biochemical and toxic effects of halogenated aromatic hydrocarbons. Next to xenobiotics, natural ligands derived from plants, microbiota, and endogenous metabolism are potent AHR agonists. Tryptophan (Trp) derivatives constitute an important class of endogenous AHR ligands. Acts as a negative regulator of anti-tumor immunity: indoles and kynurenic acid generated by Trp catabolism act as ligand and activate AHR, thereby promoting AHR-driven cancer cell motility and suppressing adaptive immunity. Regulates the circadian clock by inhibiting the basal and circadian expression of the core circadian component PER1. Inhibits PER1 by repressing the CLOCK-BMAL1 heterodimer mediated transcriptional activation of PER1. The heterodimer ARNT:AHR binds to core DNA sequence 5'-TGCGTG-3' within the dioxin response element (DRE) of target gene promoters and activates their transcription. The chain is Aryl hydrocarbon receptor (Ahr) from Mus spretus (Western Mediterranean mouse).